We begin with the raw amino-acid sequence, 408 residues long: Tryptophan synthase beta chain (408 aa).

Lysine 97 carries the post-translational modification N6-(pyridoxal phosphate)lysine.

This sequence belongs to the TrpB family. Tetramer of two alpha and two beta chains. The cofactor is pyridoxal 5'-phosphate.

It catalyses the reaction (1S,2R)-1-C-(indol-3-yl)glycerol 3-phosphate + L-serine = D-glyceraldehyde 3-phosphate + L-tryptophan + H2O. It participates in amino-acid biosynthesis; L-tryptophan biosynthesis; L-tryptophan from chorismate: step 5/5. Functionally, the beta subunit is responsible for the synthesis of L-tryptophan from indole and L-serine. In Pseudomonas syringae pv. syringae, this protein is Tryptophan synthase beta chain (trpB).